The chain runs to 255 residues: H-2 class II histocompatibility antigen, E-D alpha chain (255 aa).

Positions 1 to 25 are cleaved as a signal peptide; it reads MATIGALVLRFFFIAVLMSSQKSWA. The alpha-1 stretch occupies residues 26-109; it reads IKEEHTIIQA…ERSNNTPDAN (84 aa). The Extracellular segment spans residues 26 to 216; it reads IKEEHTIIQA…EKTLLPETKE (191 aa). The tract at residues 110–203 is alpha-2; that stretch reads VAPEVTVLSR…GLEEPLRKTW (94 aa). Positions 112 to 204 constitute an Ig-like C1-type domain; it reads PEVTVLSRSP…LEEPLRKTWE (93 aa). Cys132 and Cys188 are disulfide-bonded. Residue Asn143 is glycosylated (N-linked (GlcNAc...) asparagine). The interval 204-216 is connecting peptide; that stretch reads EFEEKTLLPETKE. A helical membrane pass occupies residues 217 to 242; sequence NVMCALGLFVGLVGIVVGIILIMKGI. At 243–255 the chain is on the cytoplasmic side; that stretch reads KKRNVVERRQGAL.

It belongs to the MHC class II family.

The protein resides in the membrane. This is H-2 class II histocompatibility antigen, E-D alpha chain (H2-Ea) from Mus musculus (Mouse).